Reading from the N-terminus, the 164-residue chain is PTS system sorbose-specific EIIB component (164 aa).

Residues methionine 1–glutamate 164 enclose the PTS EIIB type-4 domain. The active-site Pros-phosphohistidine intermediate is the histidine 14. Phosphohistidine; by EIIA is present on histidine 14.

It localises to the cytoplasm. It carries out the reaction keto-L-sorbose(out) + N(pros)-phospho-L-histidyl-[protein] = L-sorbose 1-phosphate(in) + L-histidyl-[protein]. The phosphoenolpyruvate-dependent sugar phosphotransferase system (PTS), a major carbohydrate active transport system, catalyzes the phosphorylation of incoming sugar substrates concomitant with their translocation across the cell membrane. The enzyme II SorABCD PTS system is involved in L-sorbose transport. The protein is PTS system sorbose-specific EIIB component of Lacticaseibacillus casei (Lactobacillus casei).